The sequence spans 344 residues: L-lactate dehydrogenase B (344 aa).

NAD(+) is bound by residues 62-67 (DALPDK) and arginine 109. 3 residues coordinate substrate: arginine 116, asparagine 148, and arginine 179. Asparagine 148 serves as a coordination point for NAD(+). Histidine 203 functions as the Proton acceptor in the catalytic mechanism. Threonine 258 is a substrate binding site.

This sequence belongs to the LDH/MDH superfamily. LDH family. Tetramer that arise from random association of LDH-A and LDH-B.

The enzyme catalyses (S)-lactate + NAD(+) = pyruvate + NADH + H(+). It participates in fermentation; pyruvate fermentation to lactate; (S)-lactate from pyruvate: step 1/1. The polypeptide is L-lactate dehydrogenase B (Hordeum vulgare (Barley)).